A 373-amino-acid polypeptide reads, in one-letter code: Cytoplasmic tRNA 2-thiolation protein 1 (373 aa).

The protein belongs to the TtcA family. CTU1/NCS6/ATPBD3 subfamily.

It localises to the cytoplasm. Its pathway is tRNA modification; 5-methoxycarbonylmethyl-2-thiouridine-tRNA biosynthesis. Plays a central role in 2-thiolation of mcm(5)S(2)U at tRNA wobble positions of tRNA(Lys), tRNA(Glu) and tRNA(Gln). Directly binds tRNAs and probably acts by catalyzing adenylation of tRNAs, an intermediate required for 2-thiolation. It is unclear whether it acts as a sulfurtransferase that transfers sulfur from thiocarboxylated URM1 onto the uridine of tRNAs at wobble position. Prior mcm(5) tRNA modification by the elongator complex is required for 2-thiolation. May also be involved in protein urmylation. The polypeptide is Cytoplasmic tRNA 2-thiolation protein 1 (Eremothecium gossypii (strain ATCC 10895 / CBS 109.51 / FGSC 9923 / NRRL Y-1056) (Yeast)).